The primary structure comprises 361 residues: Isopentenyl-diphosphate delta-isomerase (361 aa).

R12–K13 provides a ligand contact to substrate. FMN contacts are provided by residues S70, S71 to T73, S101, and N130. S101–R103 is a binding site for substrate. Q165 is a binding site for substrate. Position 166 (E166) interacts with Mg(2+). FMN-binding positions include K197 and A310–G311.

Belongs to the IPP isomerase type 2 family. Homooctamer. Dimer of tetramers. It depends on FMN as a cofactor. NADPH serves as cofactor. Mg(2+) is required as a cofactor.

The protein localises to the cytoplasm. The catalysed reaction is isopentenyl diphosphate = dimethylallyl diphosphate. Involved in the biosynthesis of isoprenoids. Catalyzes the 1,3-allylic rearrangement of the homoallylic substrate isopentenyl (IPP) to its allylic isomer, dimethylallyl diphosphate (DMAPP). The chain is Isopentenyl-diphosphate delta-isomerase from Chlorobium luteolum (strain DSM 273 / BCRC 81028 / 2530) (Pelodictyon luteolum).